The chain runs to 1185 residues: Chromosome partition protein Smc (1185 aa).

32–39 (PNGSGKSN) contributes to the ATP binding site. Positions 167-494 (ISKYKSRKMD…KLNEKNSHLS (328 aa)) form a coiled coil. An SMC hinge domain is found at 521–639 (TGIIGVVADQ…TDLKSAIEIA (119 aa)). Residues 677–1031 (RSRKIEDLKK…KVIQEIEETM (355 aa)) adopt a coiled-coil conformation.

Belongs to the SMC family. As to quaternary structure, homodimer.

The protein resides in the cytoplasm. Required for chromosome condensation and partitioning. This Halothermothrix orenii (strain H 168 / OCM 544 / DSM 9562) protein is Chromosome partition protein Smc.